Consider the following 281-residue polypeptide: Pre T-cell antigen receptor alpha (281 aa).

The signal sequence occupies residues 1–23 (MAGTWLLLLLALGCPALPTGVGG). Topologically, residues 24–146 (TPFPSLAPPI…QEPLRGTPGG (123 aa)) are extracellular. A disulfide bond links cysteine 47 and cysteine 107. The N-linked (GlcNAc...) asparagine glycan is linked to asparagine 67. A helical membrane pass occupies residues 147–167 (ALWLGVLRLLLFKLLLFDLLL). The Cytoplasmic portion of the chain corresponds to 168-281 (TCSCLCDPAG…LPPPLQAGAA (114 aa)). The segment at 196 to 233 (LHPATETGGREATSSPRPQPRDRRWGDTPPGRKPGSPV) is disordered.

In terms of assembly, heterodimer with TCRB; disulfide linked. This heterodimer assembles with CD3 proteins into a signaling-competent pre-T-cell receptor complex. Interacts with RHBDD1. In terms of tissue distribution, expressed in immature but not mature T-cells. Also found in CD34+ cells from peripheral blood, CD34+ precursors from umbilical cord blood and adult bone marrow.

Its subcellular location is the membrane. The protein resides in the cell membrane. Its function is as follows. Component of the pre-T-cell receptor complex (composed of PTCRA, TCRB and the CD3 complex) that has a crucial role in early T-cell development, particularly alpha-beta T cell differentiation. This chain is Pre T-cell antigen receptor alpha, found in Homo sapiens (Human).